The chain runs to 192 residues: Peptidyl-tRNA hydrolase (192 aa).

Tyrosine 14 is a binding site for tRNA. The Proton acceptor role is filled by histidine 19. Residues tyrosine 64, asparagine 66, and asparagine 112 each contribute to the tRNA site.

The protein belongs to the PTH family. As to quaternary structure, monomer.

It is found in the cytoplasm. It carries out the reaction an N-acyl-L-alpha-aminoacyl-tRNA + H2O = an N-acyl-L-amino acid + a tRNA + H(+). Functionally, hydrolyzes ribosome-free peptidyl-tRNAs (with 1 or more amino acids incorporated), which drop off the ribosome during protein synthesis, or as a result of ribosome stalling. Its function is as follows. Catalyzes the release of premature peptidyl moieties from peptidyl-tRNA molecules trapped in stalled 50S ribosomal subunits, and thus maintains levels of free tRNAs and 50S ribosomes. This Prosthecochloris aestuarii (strain DSM 271 / SK 413) protein is Peptidyl-tRNA hydrolase.